Here is a 131-residue protein sequence, read N- to C-terminus: Probable ATP synthase subunit g 2, mitochondrial (131 aa).

It belongs to the ATPase g subunit family. Subunit of the F-type ATPase which has 2 components, CF(1) - the catalytic core - and CF(0) - the membrane proton channel.

Its subcellular location is the mitochondrion membrane. Functionally, mitochondrial membrane ATP synthase (F(1)F(0) ATP synthase or Complex V) produces ATP from ADP in the presence of a proton gradient across the membrane which is generated by electron transport complexes of the respiratory chain. F-type ATPases consist of two structural domains, F(1) - containing the extramembraneous catalytic core, and F(0) - containing the membrane proton channel, linked together by a central stalk and a peripheral stalk. During catalysis, ATP synthesis in the catalytic domain of F(1) is coupled via a rotary mechanism of the central stalk subunits to proton translocation. Part of the complex F(0) domain. Minor subunit located with subunit a in the membrane. The chain is Probable ATP synthase subunit g 2, mitochondrial from Caenorhabditis elegans.